The primary structure comprises 308 residues: Putative ankyrin repeat protein R835 (308 aa).

ANK repeat units follow at residues 100–129 (DINEAIKNIIIVNNIDSLKYLLEKGANIDL), 152–181 (PMNKFLPIAVEYGHLNLVKFLVEKGVYVDF), 190–217 (SEYTPLVAACSAGHIKIVEYLIEKGANY), 218–247 (KSSYGVYLAAEKGHYDIVKFLIDKGTDLEK), 249–277 (GLRSLNEVIKKGHFDIMKLFINSGLEIDY), and 279–305 (YYIYKAGLRGHTDIVKYLVMMQMSKQI).

The protein is Putative ankyrin repeat protein R835 of Acanthamoeba polyphaga (Amoeba).